We begin with the raw amino-acid sequence, 60 residues long: Metallothionein B (60 aa).

The interval 1 to 28 (MDPCECSKSGTCNCGGSCTCTNCSCTSC) is beta. The a divalent metal cation site is built by Cys4, Cys6, Cys12, Cys14, Cys18, Cys20, Cys23, Cys25, Cys28, Cys32, Cys33, Cys35, Cys36, Cys40, Cys43, Cys47, Cys49, Cys54, Cys58, and Cys59. The segment at 29–60 (KKSCCPCCPSGCTKCASGCVCKGKTCDTSCCQ) is alpha.

This sequence belongs to the metallothionein superfamily. Type 1 family.

Functionally, metallothioneins have a high content of cysteine residues that bind various heavy metals. The polypeptide is Metallothionein B (mtb) (Trematomus bernacchii (Emerald rockcod)).